Reading from the N-terminus, the 90-residue chain is Genome polyprotein (90 aa).

The protein belongs to the potyviridae genome polyprotein family. In terms of processing, genome polyprotein of potyviruses undergoes post-translational proteolytic processing by the main proteinase NIa-pro resulting in the production of at least ten individual proteins. The P1 proteinase and the HC-pro cleave only their respective C-termini autocatalytically. 6K1 is essential for proper proteolytic separation of P3 from CI.

It is found in the virion. Functionally, involved in aphid transmission, cell-to-cell and systemis movement, encapsidation of the viral RNA and in the regulation of viral RNA amplification. The protein is Genome polyprotein of Gloriosa stripe mosaic virus (GSMV).